Here is a 271-residue protein sequence, read N- to C-terminus: uncharacterized protein (271 aa).

Disordered regions lie at residues Lys50–Leu93 and Lys128–Val233. Low complexity-rich tracts occupy residues Ser61–Leu93 and Asn129–Asn165. Residues Thr169–Asn179 show a composition bias toward basic and acidic residues. Acidic residues-rich tracts occupy residues Glu180–Glu199 and Met207–Glu217.

This is an uncharacterized protein from Dictyostelium discoideum (Social amoeba).